The following is a 337-amino-acid chain: Probable dual-specificity RNA methyltransferase RlmN (337 aa).

The Proton acceptor role is filled by Glu88. The Radical SAM core domain maps to 94–324 (SEKRLTVCVS…VRYSRGLATD (231 aa)). A disulfide bond links Cys101 and Cys327. Residues Cys108, Cys112, and Cys115 each contribute to the [4Fe-4S] cluster site. Residues 155–156 (GE), Ser185, 208–210 (SLH), and Asn284 contribute to the S-adenosyl-L-methionine site. Cys327 serves as the catalytic S-methylcysteine intermediate.

Belongs to the radical SAM superfamily. RlmN family. The cofactor is [4Fe-4S] cluster.

The protein resides in the cytoplasm. The catalysed reaction is adenosine(2503) in 23S rRNA + 2 reduced [2Fe-2S]-[ferredoxin] + 2 S-adenosyl-L-methionine = 2-methyladenosine(2503) in 23S rRNA + 5'-deoxyadenosine + L-methionine + 2 oxidized [2Fe-2S]-[ferredoxin] + S-adenosyl-L-homocysteine. The enzyme catalyses adenosine(37) in tRNA + 2 reduced [2Fe-2S]-[ferredoxin] + 2 S-adenosyl-L-methionine = 2-methyladenosine(37) in tRNA + 5'-deoxyadenosine + L-methionine + 2 oxidized [2Fe-2S]-[ferredoxin] + S-adenosyl-L-homocysteine. Functionally, specifically methylates position 2 of adenine 2503 in 23S rRNA and position 2 of adenine 37 in tRNAs. The protein is Probable dual-specificity RNA methyltransferase RlmN of Microcystis aeruginosa (strain NIES-843 / IAM M-2473).